The sequence spans 622 residues: Glutamyl-tRNA(Gln) amidotransferase subunit B, mitochondrial (622 aa).

The transit peptide at 1–54 directs the protein to the mitochondrion; the sequence is MSRIPTRELGRYLLQGQICQRGCVASSVSKSRAKQLGRHPLLPHDRHQPTQARH. Residues 30–67 form a disordered region; sequence KSRAKQLGRHPLLPHDRHQPTQARHAHTVTTTATPTQL. Positions 57-67 are enriched in low complexity; that stretch reads TVTTTATPTQL.

Belongs to the GatB/GatE family. GatB subfamily. As to quaternary structure, subunit of the heterotrimeric GatCAB amidotransferase (AdT) complex, composed of A, B and C subunits.

The protein resides in the mitochondrion. The catalysed reaction is L-glutamyl-tRNA(Gln) + L-glutamine + ATP + H2O = L-glutaminyl-tRNA(Gln) + L-glutamate + ADP + phosphate + H(+). In terms of biological role, allows the formation of correctly charged Gln-tRNA(Gln) through the transamidation of misacylated Glu-tRNA(Gln) in the mitochondria. The reaction takes place in the presence of glutamine and ATP through an activated gamma-phospho-Glu-tRNA(Gln). The polypeptide is Glutamyl-tRNA(Gln) amidotransferase subunit B, mitochondrial (Verticillium alfalfae (strain VaMs.102 / ATCC MYA-4576 / FGSC 10136) (Verticillium wilt of alfalfa)).